We begin with the raw amino-acid sequence, 262 residues long: Ornithine carbamoyltransferase (262 aa).

Carbamoyl phosphate is bound by residues 3 to 7 (STRTR), Gln-30, Arg-54, and 81 to 84 (HPTQ). L-ornithine-binding positions include Asn-114, Asp-178, and 182-183 (SM). Residues 219–222 (HCLP) and Thr-247 each bind carbamoyl phosphate.

This sequence belongs to the aspartate/ornithine carbamoyltransferase superfamily. OTCase family.

It localises to the cytoplasm. The enzyme catalyses carbamoyl phosphate + L-ornithine = L-citrulline + phosphate + H(+). It functions in the pathway amino-acid biosynthesis; L-arginine biosynthesis; L-arginine from L-ornithine and carbamoyl phosphate: step 1/3. Its function is as follows. Reversibly catalyzes the transfer of the carbamoyl group from carbamoyl phosphate (CP) to the N(epsilon) atom of ornithine (ORN) to produce L-citrulline. This is Ornithine carbamoyltransferase (argF) from Neisseria polysaccharea.